We begin with the raw amino-acid sequence, 213 residues long: Outer-membrane lipoprotein carrier protein (213 aa).

An N-terminal signal peptide occupies residues 1-18 (MKYFATICIAAYAGLAGA).

The protein belongs to the LolA family. As to quaternary structure, monomer.

It is found in the periplasm. Participates in the translocation of lipoproteins from the inner membrane to the outer membrane. Only forms a complex with a lipoprotein if the residue after the N-terminal Cys is not an aspartate (The Asp acts as a targeting signal to indicate that the lipoprotein should stay in the inner membrane). The protein is Outer-membrane lipoprotein carrier protein of Albidiferax ferrireducens (strain ATCC BAA-621 / DSM 15236 / T118) (Rhodoferax ferrireducens).